The following is a 346-amino-acid chain: N-acetyl-gamma-glutamyl-phosphate reductase (346 aa).

The active site involves cysteine 149.

This sequence belongs to the NAGSA dehydrogenase family. Type 1 subfamily.

Its subcellular location is the cytoplasm. It catalyses the reaction N-acetyl-L-glutamate 5-semialdehyde + phosphate + NADP(+) = N-acetyl-L-glutamyl 5-phosphate + NADPH + H(+). Its pathway is amino-acid biosynthesis; L-arginine biosynthesis; N(2)-acetyl-L-ornithine from L-glutamate: step 3/4. Catalyzes the NADPH-dependent reduction of N-acetyl-5-glutamyl phosphate to yield N-acetyl-L-glutamate 5-semialdehyde. The polypeptide is N-acetyl-gamma-glutamyl-phosphate reductase (Desulfotalea psychrophila (strain LSv54 / DSM 12343)).